We begin with the raw amino-acid sequence, 206 residues long: Adenylate kinase (206 aa).

The disordered stretch occupies residues 1–21 (MSQPKILLLGAPGAGKGTQSS). 13–18 (GAGKGT) provides a ligand contact to ATP. Residues 33–61 (TTGDALRANKDMETEHGTPREFMEAGELV) are NMP. AMP contacts are provided by residues Thr-34, Arg-39, 59–61 (ELV), 84–87 (GYPR), and Gln-91. Residues 120-153 (GRRMDPETGDIYHTEFNMPDDEEVRERLVQRDDD) form an LID region. Residues Arg-121 and 130 to 131 (IY) contribute to the ATP site. AMP contacts are provided by Arg-150 and Arg-161. An ATP-binding site is contributed by Ala-189.

The protein belongs to the adenylate kinase family. As to quaternary structure, monomer.

It is found in the cytoplasm. It carries out the reaction AMP + ATP = 2 ADP. The protein operates within purine metabolism; AMP biosynthesis via salvage pathway; AMP from ADP: step 1/1. Its function is as follows. Catalyzes the reversible transfer of the terminal phosphate group between ATP and AMP. Plays an important role in cellular energy homeostasis and in adenine nucleotide metabolism. The protein is Adenylate kinase of Natronomonas pharaonis (strain ATCC 35678 / DSM 2160 / CIP 103997 / JCM 8858 / NBRC 14720 / NCIMB 2260 / Gabara) (Halobacterium pharaonis).